Reading from the N-terminus, the 270-residue chain is tRNA (guanine-N(1)-)-methyltransferase (270 aa).

Residues Gly-117 and 137–142 (IGDYVL) contribute to the S-adenosyl-L-methionine site.

It belongs to the RNA methyltransferase TrmD family. As to quaternary structure, homodimer.

It is found in the cytoplasm. It carries out the reaction guanosine(37) in tRNA + S-adenosyl-L-methionine = N(1)-methylguanosine(37) in tRNA + S-adenosyl-L-homocysteine + H(+). Specifically methylates guanosine-37 in various tRNAs. In Heliobacterium modesticaldum (strain ATCC 51547 / Ice1), this protein is tRNA (guanine-N(1)-)-methyltransferase.